Here is a 610-residue protein sequence, read N- to C-terminus: Preterminal protein (610 aa).

The tract at residues 288–379 (TLRSGTQTGL…ESFSDDVGLS (92 aa)) is disordered. The Nuclear localization signal motif lies at 328–337 (SLPIRRRRRR). A compositionally biased stretch (basic residues) spans 331 to 340 (IRRRRRRGTR). The span at 341 to 350 (RQVEREDSVR) shows a compositional bias: basic and acidic residues. O-(5'-phospho-DNA)-serine is present on Ser-549.

The protein belongs to the adenoviridae terminal protein family. Heterodimer with the polymerase; this heterodimer binds to bp 9 to 18 of the genome. Interacts with host POU2F1; POU2F1 binds to the auxiliary sequences in the inverted terminal repeats and tethers the pTP-POL heterodimer to the origin DNA thereby participating in the assembly of the pre-initiation complex (POL-TP-DBP-NFIA-POU2F1). Post-translationally, preterminal protein is used to replicate viral genome, upon genomic encapsidation it is processed first into iTP and finally into TP by adenovirus protease.

It is found in the host nucleus matrix. Functionally, protein covalently bound to the viral DNA that acts as a primer for viral genomic replication by DNA strand displacement. Assembles on the viral origin of replication in an initiation complex with viral polymerase, DBP, host NFIA and host POU2F1/OCT1. During initiation, the polymerase covalently couples the first dCTP with Ser-580 of pTP. The terminal protein stimulates the template activity over 20 fold compared to protein-free templates. Neo-synthesized viral genomes are linked to two preterminal proteins, one for each 5' end. These new genomes are encapsidated in the nucleus, and during capsid maturation by viral protease, preterminal protein is first cleaved into intermediary (iTP), then into mature TP. May play a role in host nuclear matrix localization of genomic DNA. The polypeptide is Preterminal protein (Snake adenovirus serotype 1 (SnAdV-1)).